We begin with the raw amino-acid sequence, 135 residues long: Retinol-binding protein 5 (135 aa).

It belongs to the calycin superfamily. Fatty-acid binding protein (FABP) family.

The protein resides in the cytoplasm. In terms of biological role, intracellular transport of retinol. The chain is Retinol-binding protein 5 (RBP5) from Pongo abelii (Sumatran orangutan).